A 276-amino-acid chain; its full sequence is NH(3)-dependent NAD(+) synthetase (276 aa).

39 to 46 (GLSGGVDS) lines the ATP pocket. Position 45 (aspartate 45) interacts with Mg(2+). A deamido-NAD(+)-binding site is contributed by arginine 123. An ATP-binding site is contributed by threonine 143. Glutamate 148 provides a ligand contact to Mg(2+). 2 residues coordinate deamido-NAD(+): lysine 156 and aspartate 163. The ATP site is built by lysine 172 and serine 194. A deamido-NAD(+)-binding site is contributed by 254-255 (HK).

The protein belongs to the NAD synthetase family. Homodimer.

The enzyme catalyses deamido-NAD(+) + NH4(+) + ATP = AMP + diphosphate + NAD(+) + H(+). Its pathway is cofactor biosynthesis; NAD(+) biosynthesis; NAD(+) from deamido-NAD(+) (ammonia route): step 1/1. Catalyzes the ATP-dependent amidation of deamido-NAD to form NAD. Uses ammonia as a nitrogen source. In Hyperthermus butylicus (strain DSM 5456 / JCM 9403 / PLM1-5), this protein is NH(3)-dependent NAD(+) synthetase.